Consider the following 471-residue polypeptide: MDVNSEPVKKVLSKYKFRDVAVEELQKVYRVYPDMKIMAGTYTSSDSLQKDLLKLVGNIPVVYQGRSYNIPILLWLLDSFPFTPPICYLRPTSSMVIREGKHVDSKGRIHLPALHNWDHPKSSVNALLAEMIGKFEEEPPLGTKSSAHGDTPSNLLDYVSNLTITEGGNRPDQEVKVSVIGGGDLGIAAVLSIMAKSCVDKLVLIDIPENSTKGGTMDLEIFSLPKVEVSKDLSASAGSKVLVITANAWSDEQSYLSVVQTNVDMYRGIIPRLAQLSPNAVLVIASQPVDVMTHVAWRQSHLLPTQVIGVGCNLDSQRLSHIINISLVANNTGKQAWVIGELSENKVAVWGNMGPGTDQLQALTPVSNSTKPLMDRAFEMIKGRGQRSWSVGLSIADITHSIVTNQKKVHSVTTLAEGWGGIGSKVFLSLPCILGETGSTRLPGVALGSEDEMKLRESVACQVNLFMQLRL.

The region spanning 2–145 (DVNSEPVKKV…EEEPPLGTKS (144 aa)) is the UEV domain. 183-211 (GDLGIAAVLSIMAKSCVDKLVLIDIPENS) is a binding site for NAD(+).

In the N-terminal section; belongs to the ubiquitin-conjugating enzyme family. UEV subfamily. The protein in the C-terminal section; belongs to the LDH/MDH superfamily. Homodimer.

Possible negative regulator of polyubiquitination. This is Ubiquitin-conjugating enzyme E2 variant 3 (uevld) from Danio rerio (Zebrafish).